Here is a 674-residue protein sequence, read N- to C-terminus: Probable potassium transport system protein Kup (674 aa).

Transmembrane regions (helical) follow at residues 7–27 (IFWGALITLGIVYGDIGTSPL), 52–72 (LSLVFWTLMLMTTIKYVLIAL), 95–115 (WLILPALLGGAALLADGTLTP), 145–165 (LVTFVILLVLFLIQRFGTSFI), 169–189 (FGPLMLLWFSFLAIFGIVNLI), 204–224 (LMLLFSPANKVGIFILGSVFL), 244–264 (IYLTWPFVCGALVLNYFGQGA), 291–311 (VYLFGVLISTIAAIIASQALI), 342–362 (IYIRTINWSLCICTLLVLVYF), 368–388 (MEAAYGLAITITMLMTTILLS), 397–417 (VVFNGIFLAVFLSVELIFLIS), and 425–445 (GGYVTLLITLLILLIMVIWYF).

It belongs to the HAK/KUP transporter (TC 2.A.72) family.

Its subcellular location is the cell membrane. The catalysed reaction is K(+)(in) + H(+)(in) = K(+)(out) + H(+)(out). Functionally, transport of potassium into the cell. Likely operates as a K(+):H(+) symporter. The protein is Probable potassium transport system protein Kup of Ligilactobacillus salivarius (strain UCC118) (Lactobacillus salivarius).